A 530-amino-acid polypeptide reads, in one-letter code: Histone-arginine methyltransferase CARMER (530 aa).

Positions 141–450 (ASQYFQFYGY…QSYDVTIDLH (310 aa)) constitute an SAM-dependent MTase PRMT-type domain. The S-adenosyl-L-methionine site is built by Gln-154, Arg-163, Gly-187, Glu-209, Glu-238, and Thr-266. Arg-501 carries the asymmetric dimethylarginine; by autocatalysis modification.

It belongs to the class I-like SAM-binding methyltransferase superfamily. Protein arginine N-methyltransferase family. Homodimer. In terms of processing, the dimethylated protein is the major form.

The protein localises to the cytoplasm. It is found in the nucleus. The enzyme catalyses L-arginyl-[protein] + 2 S-adenosyl-L-methionine = N(omega),N(omega)-dimethyl-L-arginyl-[protein] + 2 S-adenosyl-L-homocysteine + 2 H(+). Functionally, methylates (mono- and asymmetric dimethylation) the guanidino nitrogens of arginyl residues in proteins. May methylate histone H3 at 'Arg-17' and activate transcription via chromatin remodeling. The sequence is that of Histone-arginine methyltransferase CARMER (Art4) from Drosophila yakuba (Fruit fly).